Here is a 394-residue protein sequence, read N- to C-terminus: uncharacterized protein (394 aa).

Helical transmembrane passes span L31 to L51 and L57 to I77.

Belongs to the chlamydial CPn_0129/CT_036/TC_0306 family.

The protein localises to the cell membrane. This is an uncharacterized protein from Chlamydia pneumoniae (Chlamydophila pneumoniae).